Reading from the N-terminus, the 248-residue chain is Large ribosomal subunit protein uL30 (248 aa).

M1 is modified (N-acetylmethionine). 4 consecutive repeat copies span residues K7–L18, K19–I30, K31–L42, and R43–A54. Residues K7–A54 are 4 X 12 AA tandem repeats. Position 17 is a phosphothreonine (T17). Position 124 is an N6-acetyllysine (K124). An N6-succinyllysine modification is found at K127. At Y139 the chain carries Phosphotyrosine.

This sequence belongs to the universal ribosomal protein uL30 family. In terms of assembly, component of the large ribosomal subunit. Homodimer. Interacts with DHX33.

The protein localises to the cytoplasm. Functionally, component of the large ribosomal subunit. The ribosome is a large ribonucleoprotein complex responsible for the synthesis of proteins in the cell. Binds to G-rich structures in 28S rRNA and in mRNAs. Plays a regulatory role in the translation apparatus; inhibits cell-free translation of mRNAs. This is Large ribosomal subunit protein uL30 (RPL7) from Homo sapiens (Human).